The chain runs to 381 residues: Arf-GAP with dual PH domain-containing protein 2 (381 aa).

Residues 9–132 form the Arf-GAP domain; sequence KRLLELLQAA…TAIDKAVSHP (124 aa). The C4-type zinc finger occupies 25–48; that stretch reads CADCGAADPDWASYKLGIFICLHC. 2 PH domains span residues 132–233 and 255–361; these read PGNR…AARL and NYLK…GVLS.

Its subcellular location is the cytoplasm. It localises to the cell membrane. Its function is as follows. GTPase-activating protein for the ADP ribosylation factor family (Potential). Binds phosphatidylinositol 3,4,5-trisphosphate (PtdInsP3) and inositol 1,3,4,5-tetrakisphosphate (InsP4). Possesses a stoichiometry of two binding sites for InsP4 with identical affinity. The polypeptide is Arf-GAP with dual PH domain-containing protein 2 (Adap2) (Mus musculus (Mouse)).